The sequence spans 411 residues: Serine hydroxymethyltransferase (411 aa).

120-122 provides a ligand contact to (6S)-5,6,7,8-tetrahydrofolate; the sequence is GHL. N6-(pyridoxal phosphate)lysine is present on lysine 225. (6S)-5,6,7,8-tetrahydrofolate is bound at residue 350–352; that stretch reads SPF.

This sequence belongs to the SHMT family. As to quaternary structure, homodimer. The cofactor is pyridoxal 5'-phosphate.

It is found in the cytoplasm. The enzyme catalyses (6R)-5,10-methylene-5,6,7,8-tetrahydrofolate + glycine + H2O = (6S)-5,6,7,8-tetrahydrofolate + L-serine. It functions in the pathway one-carbon metabolism; tetrahydrofolate interconversion. Its pathway is amino-acid biosynthesis; glycine biosynthesis; glycine from L-serine: step 1/1. Functionally, catalyzes the reversible interconversion of serine and glycine with tetrahydrofolate (THF) serving as the one-carbon carrier. This reaction serves as the major source of one-carbon groups required for the biosynthesis of purines, thymidylate, methionine, and other important biomolecules. Also exhibits THF-independent aldolase activity toward beta-hydroxyamino acids, producing glycine and aldehydes, via a retro-aldol mechanism. This chain is Serine hydroxymethyltransferase, found in Lactobacillus johnsonii (strain CNCM I-12250 / La1 / NCC 533).